We begin with the raw amino-acid sequence, 84 residues long: DNA-directed RNA polymerase subunit Rpo5 (84 aa).

Belongs to the archaeal Rpo5/eukaryotic RPB5 RNA polymerase subunit family. As to quaternary structure, part of the RNA polymerase complex.

Its subcellular location is the cytoplasm. It carries out the reaction RNA(n) + a ribonucleoside 5'-triphosphate = RNA(n+1) + diphosphate. In terms of biological role, DNA-dependent RNA polymerase (RNAP) catalyzes the transcription of DNA into RNA using the four ribonucleoside triphosphates as substrates. This is DNA-directed RNA polymerase subunit Rpo5 from Saccharolobus islandicus (strain Y.N.15.51 / Yellowstone #2) (Sulfolobus islandicus).